Reading from the N-terminus, the 89-residue chain is MTEAATSLKRTLVGRVVSSKMDKTVTVLVENRVKHPLYGKYVVRSKKYHAHDEANQYKEGDRVEIVESRPISRTKAWVVSRLVEAARVI.

It belongs to the universal ribosomal protein uS17 family. Part of the 30S ribosomal subunit.

One of the primary rRNA binding proteins, it binds specifically to the 5'-end of 16S ribosomal RNA. The polypeptide is Small ribosomal subunit protein uS17 (Ralstonia nicotianae (strain ATCC BAA-1114 / GMI1000) (Ralstonia solanacearum)).